A 225-amino-acid chain; its full sequence is Cytidylate kinase (225 aa).

11 to 19 lines the ATP pocket; that stretch reads GPAGVGKST.

The protein belongs to the cytidylate kinase family. Type 1 subfamily.

It localises to the cytoplasm. The catalysed reaction is CMP + ATP = CDP + ADP. The enzyme catalyses dCMP + ATP = dCDP + ADP. This chain is Cytidylate kinase, found in Lawsonia intracellularis (strain PHE/MN1-00).